The primary structure comprises 530 residues: 6-phosphofructo-2-kinase/fructose-2,6-bisphosphatase 2 (530 aa).

Positions 1–15 (MSGASSSEQNNNSYE) are enriched in polar residues. The disordered stretch occupies residues 1–21 (MSGASSSEQNNNSYETKPPNL). Ser-2 carries the post-translational modification N-acetylserine. Residues 2–248 (SGASSSEQNN…VYYLMNIHVQ (247 aa)) form a 6-phosphofructo-2-kinase region. Phosphoserine; by PKA is present on Ser-29. Position 45–53 (45–53 (GLPARGKTY)) interacts with ATP. Residues Arg-78 and Arg-102 each contribute to the beta-D-fructose 6-phosphate site. Asp-128 is an active-site residue. Beta-D-fructose 6-phosphate-binding residues include Thr-130 and Arg-136. Cys-158 is a catalytic residue. Position 167–172 (167–172 (NILEVK)) interacts with ATP. 3 residues coordinate beta-D-fructose 6-phosphate: Lys-172, Arg-193, and Tyr-197. Positions 249–530 (PRTIYLCRHG…PPALASCPCH (282 aa)) are fructose-2,6-bisphosphatase. Arg-256 serves as a coordination point for beta-D-fructose 2,6-bisphosphate. His-257 acts as the Tele-phosphohistidine intermediate in catalysis. A beta-D-fructose 2,6-bisphosphate-binding site is contributed by Gly-269. Glu-326 serves as the catalytic Proton donor/acceptor. 6 residues coordinate beta-D-fructose 2,6-bisphosphate: Tyr-337, Arg-351, Lys-355, Tyr-366, Gln-392, and Arg-396. 348–351 (FALR) lines the ATP pocket. ATP-binding positions include 392-396 (QAVMR) and Tyr-428. The interval 446-512 (RDKPTNNFPK…GPTSRRPKSH (67 aa)) is disordered. The segment covering 450–476 (TNNFPKNQTPVRMRRNSFTPLSSSNTI) has biased composition (polar residues). Residue Ser-466 is modified to Phosphoserine; by AMPK and PKA. Residue Thr-468 is modified to Phosphothreonine. The residue at position 475 (Thr-475) is a Phosphothreonine; by PKC. Residues Ser-483 and Ser-493 each carry the phosphoserine modification.

In the C-terminal section; belongs to the phosphoglycerate mutase family. In terms of assembly, homodimer. Forms a heterodimer with PFKFB3. In terms of processing, phosphorylation by AMPK stimulates activity.

The enzyme catalyses beta-D-fructose 2,6-bisphosphate + H2O = beta-D-fructose 6-phosphate + phosphate. It carries out the reaction beta-D-fructose 6-phosphate + ATP = beta-D-fructose 2,6-bisphosphate + ADP + H(+). Its activity is regulated as follows. Phosphorylation results in the activation of the kinase activity. In terms of biological role, synthesis and degradation of fructose 2,6-bisphosphate. This Pongo abelii (Sumatran orangutan) protein is 6-phosphofructo-2-kinase/fructose-2,6-bisphosphatase 2 (PFKFB2).